We begin with the raw amino-acid sequence, 152 residues long: Large ribosomal subunit protein bL9 (152 aa).

Belongs to the bacterial ribosomal protein bL9 family.

In terms of biological role, binds to the 23S rRNA. This chain is Large ribosomal subunit protein bL9, found in Gloeothece citriformis (strain PCC 7424) (Cyanothece sp. (strain PCC 7424)).